The sequence spans 598 residues: Aspartate--tRNA(Asp/Asn) ligase (598 aa).

Glu173 lines the L-aspartate pocket. The segment at 197-200 is aspartate; sequence QLFK. Residue Arg219 participates in L-aspartate binding. ATP-binding positions include 219–221 and Gln228; that span reads RDE. His448 contacts L-aspartate. Residue Glu482 coordinates ATP. An L-aspartate-binding site is contributed by Arg489. 534 to 537 is a binding site for ATP; sequence GWDR. The interval 560 to 598 is disordered; the sequence is GYDPLTAAPAPITAQQRKEAGVDAKPETKKAAAGEPAGA. The span at 575–591 shows a compositional bias: basic and acidic residues; the sequence is QRKEAGVDAKPETKKAA.

The protein belongs to the class-II aminoacyl-tRNA synthetase family. Type 1 subfamily. In terms of assembly, homodimer.

It is found in the cytoplasm. It catalyses the reaction tRNA(Asx) + L-aspartate + ATP = L-aspartyl-tRNA(Asx) + AMP + diphosphate. Functionally, aspartyl-tRNA synthetase with relaxed tRNA specificity since it is able to aspartylate not only its cognate tRNA(Asp) but also tRNA(Asn). Reaction proceeds in two steps: L-aspartate is first activated by ATP to form Asp-AMP and then transferred to the acceptor end of tRNA(Asp/Asn). In Kineococcus radiotolerans (strain ATCC BAA-149 / DSM 14245 / SRS30216), this protein is Aspartate--tRNA(Asp/Asn) ligase.